We begin with the raw amino-acid sequence, 527 residues long: N-acetylglutamate synthase, mitochondrial (527 aa).

The N-terminal 39 residues, 1 to 39, are a transit peptide targeting the mitochondrion; it reads MAKVNSGSSGCRAMVMAGQFWTKPFALSSQRSGPHRRSA. The segment at 28–65 is disordered; that stretch reads SSQRSGPHRRSAAEVNRRMSSSRTAGHGSKTPLWSQQE. Positions 40-83 are may stabilize the oligomeric structure; that stretch reads AEVNRRMSSSRTAGHGSKTPLWSQQESYNHSSLGERSAWSNRTL. The amino-acid kinase domain (AAK) stretch occupies residues 40–361; it reads AEVNRRMSSS…SGTLFKNGDP (322 aa). An N-acetyltransferase domain is found at 360–511; that stretch reads DPIRRYSSLE…FAKSHPDSFC (152 aa). Substrate contacts are provided by residues Lys-386, Lys-429, and 459 to 464; that span reads RSRTTN.

This sequence belongs to the acetyltransferase family. As to quaternary structure, homodimer. Homotetramer.

It localises to the mitochondrion matrix. The enzyme catalyses L-glutamate + acetyl-CoA = N-acetyl-L-glutamate + CoA + H(+). Inhibited by L-arginine. In terms of biological role, plays a role in the regulation of ureagenesis by producing the essential cofactor N-acetylglutamate (NAG), thus modulating carbamoylphosphate synthase I (cps1) activity. The protein is N-acetylglutamate synthase, mitochondrial of Danio rerio (Zebrafish).